Here is a 351-residue protein sequence, read N- to C-terminus: Cyanide hydratase (351 aa).

The region spanning tyrosine 6–leucine 285 is the CN hydrolase domain. The Proton acceptor role is filled by glutamate 46. Lysine 128 is a catalytic residue. Cysteine 163 acts as the Nucleophile in catalysis.

This sequence belongs to the carbon-nitrogen hydrolase superfamily. Nitrilase family. Oligomer of dimers, forming left-handed helical fibers with a diameter of 13 nm but with lengths ranging from approximately 1 um at the leading edge of the peak to having approximately the same length and diameter at the trailing edge.

It catalyses the reaction formamide = hydrogen cyanide + H2O. Its function is as follows. Catalyzes the hydration of cyanide to formamide. Degradation of cyanide may be important for plant pathogenic fungi in infection of cyanogenic plants. The protein is Cyanide hydratase of Neurospora crassa (strain ATCC 24698 / 74-OR23-1A / CBS 708.71 / DSM 1257 / FGSC 987).